A 21-amino-acid polypeptide reads, in one-letter code: Large ribosomal subunit protein uL10 (21 aa).

The protein belongs to the universal ribosomal protein uL10 family. In terms of assembly, part of the ribosomal stalk of the 50S ribosomal subunit. The N-terminus interacts with L11 and the large rRNA to form the base of the stalk. The C-terminus forms an elongated spine to which L12 dimers bind in a sequential fashion forming a multimeric L10(L12)X complex.

Forms part of the ribosomal stalk, playing a central role in the interaction of the ribosome with GTP-bound translation factors. This Bacillus cereus protein is Large ribosomal subunit protein uL10 (rplJ).